The primary structure comprises 112 residues: Cytochrome c 2.1 (112 aa).

4 residues coordinate heme c: cysteine 20, cysteine 23, histidine 24, and methionine 85.

This sequence belongs to the cytochrome c family. Post-translationally, binds 1 heme c group covalently per subunit.

The protein resides in the mitochondrion intermembrane space. Functionally, electron carrier protein. The oxidized form of the cytochrome c heme group can accept an electron from the heme group of the cytochrome c1 subunit of cytochrome reductase. Cytochrome c then transfers this electron to the cytochrome oxidase complex, the final protein carrier in the mitochondrial electron-transport chain. This Caenorhabditis briggsae protein is Cytochrome c 2.1.